The sequence spans 158 residues: Transcriptional regulator MraZ (158 aa).

SpoVT-AbrB domains are found at residues 5 to 52 and 91 to 134; these read IYET…TFSS and AVEC…SQAE.

This sequence belongs to the MraZ family. Forms oligomers.

It localises to the cytoplasm. It is found in the nucleoid. This chain is Transcriptional regulator MraZ, found in Geobacter sulfurreducens (strain ATCC 51573 / DSM 12127 / PCA).